The sequence spans 413 residues: MYNYLLIRYGEIGLKGKNRSYFEKSLVKNMQSALKDLEIGKIKSTQGRMYIPLSGSSDELTRVLDRVTRVFGIETVSPAVKVESDLEVIKKTALQVFKNHMDSISPQNQVSFKVDCRRADKLFSKNSMEMNQILGAHILDHVPGLKVDVKQPQILLQVEIREDGTYIFTEKIPGHGGLPIGTTGKGVLMLSGGIDSPVAGWLAMKRGIQVVGLHFHSYPFTSQRALKKVEDISQVLSRYGTGPTGGFKLITNHFTDIQKAIQNYCSESMWVTVMRRFMFYIANRMAQKEQAMTVVTGENVGQVASQTLESMHAVSQDVVNLPILRPLAGLDKKEIMSKAETIGTYDISIRPYEDCCTLFLPKNPKTRPSLEQTKREISKLNFEELVEESLEKTEIKYFEPYQDITEEELTFDV.

A THUMP domain is found at 61–171; sequence TRVLDRVTRV…EDGTYIFTEK (111 aa). ATP is bound by residues 189–190, 214–215, Arg275, Gly297, and Gln306; these read ML and HF.

The protein belongs to the ThiI family.

It localises to the cytoplasm. It catalyses the reaction [ThiI sulfur-carrier protein]-S-sulfanyl-L-cysteine + a uridine in tRNA + 2 reduced [2Fe-2S]-[ferredoxin] + ATP + H(+) = [ThiI sulfur-carrier protein]-L-cysteine + a 4-thiouridine in tRNA + 2 oxidized [2Fe-2S]-[ferredoxin] + AMP + diphosphate. The enzyme catalyses [ThiS sulfur-carrier protein]-C-terminal Gly-Gly-AMP + S-sulfanyl-L-cysteinyl-[cysteine desulfurase] + AH2 = [ThiS sulfur-carrier protein]-C-terminal-Gly-aminoethanethioate + L-cysteinyl-[cysteine desulfurase] + A + AMP + 2 H(+). It functions in the pathway cofactor biosynthesis; thiamine diphosphate biosynthesis. In terms of biological role, catalyzes the ATP-dependent transfer of a sulfur to tRNA to produce 4-thiouridine in position 8 of tRNAs, which functions as a near-UV photosensor. Also catalyzes the transfer of sulfur to the sulfur carrier protein ThiS, forming ThiS-thiocarboxylate. This is a step in the synthesis of thiazole, in the thiamine biosynthesis pathway. The sulfur is donated as persulfide by IscS. This is Probable tRNA sulfurtransferase from Natranaerobius thermophilus (strain ATCC BAA-1301 / DSM 18059 / JW/NM-WN-LF).